Reading from the N-terminus, the 594-residue chain is Tripeptidyl-peptidase sed4 (594 aa).

Residues 1–20 (MLSSTLYAGWLLSLAAPALC) form the signal peptide. The propeptide at 21–187 (VVQEKLSAVP…AVKLPALPRR (167 aa)) is removed in mature form. N-linked (GlcNAc...) asparagine glycosylation is found at asparagine 191, asparagine 229, and asparagine 250. One can recognise a Peptidase S53 domain in the interval 197–594 (LITPDCLVEM…MKLKELVLSL (398 aa)). Active-site charge relay system residues include glutamate 272, aspartate 276, and serine 494. Residues aspartate 536 and isoleucine 537 each contribute to the Ca(2+) site. Asparagine 568 carries N-linked (GlcNAc...) asparagine glycosylation. Ca(2+) is bound by residues glycine 572 and aspartate 574.

The cofactor is Ca(2+). N-glycosylated.

The protein localises to the secreted. It is found in the extracellular space. The catalysed reaction is Release of an N-terminal tripeptide from a polypeptide.. Secreted tripeptidyl-peptidase which degrades proteins at acidic pHs and is involved in virulence. In Aspergillus fumigatus (strain ATCC MYA-4609 / CBS 101355 / FGSC A1100 / Af293) (Neosartorya fumigata), this protein is Tripeptidyl-peptidase sed4 (sed4).